The following is a 1368-amino-acid chain: MAYSFTEKKRIRKSFAKRATVHQVPFLLATQIQSYAQFLQENAPVAQRKSEGLQAAFNAIFPIVSHNGLARMEFVSYHLSNPPFDVKECQQRGLTFHSALRAKVRLIINDRENPTKVKEIKEQEVYMGEIPLMTSTGSFVINGTERVIVSQLHRSPGVFFEHDKGKTHSSGKLLFSARIIPYRGSWLDFEFDPKDILYFRVDRRRKMPVTILLKSIGLTPEQILAHFFVFDNFTLKTEGALMEFVPERLRGEVARFDISDKNGKVVVEKDKRINAKHIRDLDSAGTKLISVPEDYLLGRVLAKNIVDPDTGEVLANANDELTEGVLEKLRDAGVKEIQTLYTNDLDQGPYMSATLRTDDTADQTAARIAIYRMMRPGEPPTEDAVEALFQRLFYSEDSYDLSRVGRMKVNSRLNRSSGTGPMVLTDEDILDTIKLLVNLRNGKGEVDDIDHLGNRRVRCVGELAENQFRAGLSRVERAVKERLGQAETENLMPHDLINSKPISSAIREFFGSSQLSQFMDQTNPLSEVTHKRRISALGPGGLTRERAGFEVRDVHPTHYGRVCPIETPEGPNIGLINSLALYAQLNDYGFLETPYRKVENGKLTDQVDYLSAIEEGKYVVAQANATLDKDGNLIDELVSAREGSERETRMVTPDRVQYIDVAPSQIVSAAASLVPFLEHDDANRALMGANMQRQAVPCLRADKPLVGTGVERTVAVDSGTAVQATRGGVVDYVDANRVVIRVNDAEAVAGEVGVDIYNLIKYTRSNQNTNINQRPMVKVGDVVARGDVIADGASTDMGELALGQNMLVAFMPWNGYNFEDSILISERVVAEDRYTSIHIEELSVVARDTKLGPEEITRDISNLAEAQLARLDESGITYIGAEVEAGDVMVGKVTPKGETQLTPEEKLLRAIFGEKASDVKDTSLRVPSGMSGTVIDVQVFTREGVVRDKRAQSIIDEELKRYRLDLNDQLRIVEGDAFQRLERLLVGKIANGGPKKLAKGTALTKEYLADLDKWHWFDIRPAEDEVALQLEAVKVAIEQKRHDFDLAFEEKRKKLTQGDELPPGVIKMVKVYLAVKRRLQPGDKMAGRHGNKGVVSKITPIEDMPYMADGTPADIVLNPLGVPSRMNVGQILETHLGWAARGLGERIGNMLKAQAKAAEIRKLLGQIYNESGKVEDLDSLSDAEILELAENLKKGVPFATPVFDGAHEDEIRRMLDLAYPEDIAKEKGLTASKQQVTLFDGRTGEAFERPVTLGVMHMLKLHHLVDDKMHARSTGPYSLVTQQPLGGKAQFGGQRFGEMEVWALEAYGASYVLQEMLTVKSDDVNGRTKVYENIVKGEHSIDAGMPESFNVLVKEIRSLGIDIDLERN.

It belongs to the RNA polymerase beta chain family. As to quaternary structure, the RNAP catalytic core consists of 2 alpha, 1 beta, 1 beta' and 1 omega subunit. When a sigma factor is associated with the core the holoenzyme is formed, which can initiate transcription.

It catalyses the reaction RNA(n) + a ribonucleoside 5'-triphosphate = RNA(n+1) + diphosphate. Its function is as follows. DNA-dependent RNA polymerase catalyzes the transcription of DNA into RNA using the four ribonucleoside triphosphates as substrates. The protein is DNA-directed RNA polymerase subunit beta of Ralstonia pickettii (strain 12J).